The chain runs to 381 residues: Protein RecA (381 aa).

Residue 79-86 (GPESSGKT) participates in ATP binding.

The protein belongs to the RecA family.

It localises to the cytoplasm. Functionally, can catalyze the hydrolysis of ATP in the presence of single-stranded DNA, the ATP-dependent uptake of single-stranded DNA by duplex DNA, and the ATP-dependent hybridization of homologous single-stranded DNAs. It interacts with LexA causing its activation and leading to its autocatalytic cleavage. The polypeptide is Protein RecA (Streptococcus parasanguinis).